The primary structure comprises 204 residues: Molybdenum cofactor guanylyltransferase (204 aa).

Residues 12-14 (LAG), Lys25, Asn53, Asp71, and Asp101 each bind GTP. Residue Asp101 participates in Mg(2+) binding.

Belongs to the MobA family. As to quaternary structure, monomer. Mg(2+) is required as a cofactor.

It localises to the cytoplasm. The catalysed reaction is Mo-molybdopterin + GTP + H(+) = Mo-molybdopterin guanine dinucleotide + diphosphate. Its function is as follows. Transfers a GMP moiety from GTP to Mo-molybdopterin (Mo-MPT) cofactor (Moco or molybdenum cofactor) to form Mo-molybdopterin guanine dinucleotide (Mo-MGD) cofactor. The polypeptide is Molybdenum cofactor guanylyltransferase (Ralstonia pickettii (strain 12J)).